A 119-amino-acid polypeptide reads, in one-letter code: Small ribosomal subunit protein bS6 (119 aa).

It belongs to the bacterial ribosomal protein bS6 family.

In terms of biological role, binds together with bS18 to 16S ribosomal RNA. This chain is Small ribosomal subunit protein bS6, found in Thermosipho africanus (strain TCF52B).